The sequence spans 105 residues: MAVKKQFANFAEMLAGSPKPVLVDFYATWCGPCQMMAPILEQVGSHLRQQIQVVKIDTDKYPAIATQYQIQSLPTLVLFKQGQPVHRMEGVQQAAQLIQQLQVFV.

The 102-residue stretch at 1-102 (MAVKKQFANF…QAAQLIQQLQ (102 aa)) folds into the Thioredoxin domain. A disulfide bridge connects residues Cys-30 and Cys-33.

It belongs to the thioredoxin family.

This is Thioredoxin-like protein slr0233 from Synechocystis sp. (strain ATCC 27184 / PCC 6803 / Kazusa).